A 270-amino-acid polypeptide reads, in one-letter code: Putative ABC transporter ATP-binding protein MG304 homolog (270 aa).

The 231-residue stretch at 2–232 (LNVTNLSFTY…LHLFHQHHFT (231 aa)) folds into the ABC transporter domain. 36 to 43 (GHNGSGKS) provides a ligand contact to ATP.

This sequence belongs to the ABC transporter superfamily.

The sequence is that of Putative ABC transporter ATP-binding protein MG304 homolog from Mycoplasma pneumoniae (strain ATCC 29342 / M129 / Subtype 1) (Mycoplasmoides pneumoniae).